A 252-amino-acid polypeptide reads, in one-letter code: Ribosomal RNA small subunit methyltransferase NEP1 (252 aa).

Residues Leu180, Gly207, 212–214 (GKD), and 227–232 (LSNYPL) each bind S-adenosyl-L-methionine.

Belongs to the class IV-like SAM-binding methyltransferase superfamily. RNA methyltransferase NEP1 family. Homodimer. Interacts with snoRNA U3. Interacts with NOP14 and MPP10. Component of the ribosomal small subunit (SSU) processome composed of at least 40 protein subunits and snoRNA U3.

The protein resides in the nucleus. It is found in the nucleolus. The enzyme catalyses pseudouridine(1191) in yeast 18S rRNA + S-adenosyl-L-methionine = N(1)-methylpseudouridine(1191) in yeast 18S rRNA + S-adenosyl-L-homocysteine + H(+). In terms of biological role, S-adenosyl-L-methionine-dependent pseudouridine N(1)-methyltransferase that methylates pseudouridine at position 1189 (Psi1189) in 18S rRNA. Involved the biosynthesis of the hypermodified N1-methyl-N3-(3-amino-3-carboxypropyl) pseudouridine (m1acp3-Psi) conserved in eukaryotic 18S rRNA. N1-methylation is independent on acp-modification at the N3-position of U1191. Also has an essential role in 40S ribosomal subunit biogenesis independent on its methyltransferase activity, facilitating the incorporation of ribosomal protein S19 (RPS19A/RPS19B) during the formation of pre-ribosomes. The chain is Ribosomal RNA small subunit methyltransferase NEP1 from Saccharomyces cerevisiae (strain ATCC 204508 / S288c) (Baker's yeast).